The chain runs to 262 residues: T-cell surface glycoprotein YE1/48 (262 aa).

Topologically, residues Met1 to Lys44 are cytoplasmic. The helical; Signal-anchor for type II membrane protein transmembrane segment at Phe45–Ile66 threads the bilayer. Over Lys67 to His262 the chain is Extracellular. Asn86, Asn103, and Asn123 each carry an N-linked (GlcNAc...) asparagine glycan. The Cell attachment site signature appears at Arg137–Asp139. The 120-residue stretch at Gly138–Leu257 folds into the C-type lectin domain. 4 disulfide bridges follow: Cys145/Cys150, Cys163/Cys251, Cys167/Cys253, and Cys232/Cys245.

In terms of assembly, homodimer; disulfide-linked. As to expression, high, in T-lymphoma lines, very low in normal lymphocytes.

It localises to the membrane. Receptor on natural killer (NK) cells for H-2d alleles. Inhibits the activity of NK cells thus preventing cell lysis. The chain is T-cell surface glycoprotein YE1/48 (Klra1) from Mus musculus (Mouse).